The chain runs to 316 residues: 4-hydroxy-3-methylbut-2-enyl diphosphate reductase (316 aa).

C12 contacts [4Fe-4S] cluster. (2E)-4-hydroxy-3-methylbut-2-enyl diphosphate-binding residues include H41 and H74. Positions 41 and 74 each coordinate dimethylallyl diphosphate. Isopentenyl diphosphate is bound by residues H41 and H74. Residue C96 coordinates [4Fe-4S] cluster. Position 124 (H124) interacts with (2E)-4-hydroxy-3-methylbut-2-enyl diphosphate. Position 124 (H124) interacts with dimethylallyl diphosphate. Isopentenyl diphosphate is bound at residue H124. The active-site Proton donor is E126. Position 169 (T169) interacts with (2E)-4-hydroxy-3-methylbut-2-enyl diphosphate. C199 serves as a coordination point for [4Fe-4S] cluster. Positions 227, 228, 229, and 271 each coordinate (2E)-4-hydroxy-3-methylbut-2-enyl diphosphate. Residues S227, S228, N229, and S271 each contribute to the dimethylallyl diphosphate site. Residues S227, S228, N229, and S271 each coordinate isopentenyl diphosphate.

This sequence belongs to the IspH family. The cofactor is [4Fe-4S] cluster.

The catalysed reaction is isopentenyl diphosphate + 2 oxidized [2Fe-2S]-[ferredoxin] + H2O = (2E)-4-hydroxy-3-methylbut-2-enyl diphosphate + 2 reduced [2Fe-2S]-[ferredoxin] + 2 H(+). The enzyme catalyses dimethylallyl diphosphate + 2 oxidized [2Fe-2S]-[ferredoxin] + H2O = (2E)-4-hydroxy-3-methylbut-2-enyl diphosphate + 2 reduced [2Fe-2S]-[ferredoxin] + 2 H(+). The protein operates within isoprenoid biosynthesis; dimethylallyl diphosphate biosynthesis; dimethylallyl diphosphate from (2E)-4-hydroxy-3-methylbutenyl diphosphate: step 1/1. It functions in the pathway isoprenoid biosynthesis; isopentenyl diphosphate biosynthesis via DXP pathway; isopentenyl diphosphate from 1-deoxy-D-xylulose 5-phosphate: step 6/6. Its function is as follows. Catalyzes the conversion of 1-hydroxy-2-methyl-2-(E)-butenyl 4-diphosphate (HMBPP) into a mixture of isopentenyl diphosphate (IPP) and dimethylallyl diphosphate (DMAPP). Acts in the terminal step of the DOXP/MEP pathway for isoprenoid precursor biosynthesis. This is 4-hydroxy-3-methylbut-2-enyl diphosphate reductase from Xanthomonas axonopodis pv. citri (strain 306).